Consider the following 255-residue polypeptide: MNLILLCSQILLLLFTVANCDGEHQLDSSMDLKSDSTKSAVLKNVAPKNDATQAEIAKDDVALKSGKKGDYVMEIDVSDIPLDDYPINNSKSRKNSSTLPSQILTDKPNQGSNQIALKALKHRLLMEQNNNLFLRNHSVSLMNEIEARKTDIIQARQLNIDLELELEALKRELSEMNAQNARKSTKSCKKRPSKDIASPVNQLQEVIVKNTYRNKYLTLLTQLAQKINYEIANVNNPATDVPTGKSPSEGNPSTT.

The signal sequence occupies residues 1–18 (MNLILLCSQILLLLFTVA). The tract at residues 86–110 (PINNSKSRKNSSTLPSQILTDKPNQ) is disordered. Positions 87–110 (INNSKSRKNSSTLPSQILTDKPNQ) are enriched in polar residues. Asn-88, Asn-95, and Asn-136 each carry an N-linked (GlcNAc...) asparagine glycan. Disordered stretches follow at residues 177–196 (NAQN…SKDI) and 235–255 (NNPA…PSTT). Residues 183 to 192 (KSTKSCKKRP) show a composition bias toward basic residues. Residues 245–255 (KSPSEGNPSTT) show a composition bias toward polar residues.

In terms of processing, it undergoes several cleavages as it is secreted and it is further processed in the recipient female. Main cells of the accessory glands of males.

The protein localises to the secreted. Its subcellular location is the extracellular space. This protein is transferred from male to female's hemolymph during mating, affecting egglaying and behavior after mating. In Drosophila sechellia (Fruit fly), this protein is Accessory gland-specific peptide 26Aa (Acp26Aa).